Reading from the N-terminus, the 141-residue chain is D-aminoacyl-tRNA deacylase (141 aa).

A Gly-cisPro motif, important for rejection of L-amino acids motif is present at residues 133-134 (GP).

The protein belongs to the DTD family. As to quaternary structure, homodimer.

It localises to the cytoplasm. It carries out the reaction glycyl-tRNA(Ala) + H2O = tRNA(Ala) + glycine + H(+). The enzyme catalyses a D-aminoacyl-tRNA + H2O = a tRNA + a D-alpha-amino acid + H(+). Functionally, an aminoacyl-tRNA editing enzyme that deacylates mischarged D-aminoacyl-tRNAs. Also deacylates mischarged glycyl-tRNA(Ala), protecting cells against glycine mischarging by AlaRS. Acts via tRNA-based rather than protein-based catalysis; rejects L-amino acids rather than detecting D-amino acids in the active site. By recycling D-aminoacyl-tRNA to D-amino acids and free tRNA molecules, this enzyme counteracts the toxicity associated with the formation of D-aminoacyl-tRNA entities in vivo and helps enforce protein L-homochirality. The sequence is that of D-aminoacyl-tRNA deacylase from Kineococcus radiotolerans (strain ATCC BAA-149 / DSM 14245 / SRS30216).